Consider the following 407-residue polypeptide: Ornithine cyclodeaminase (407 aa).

10 residues coordinate NAD(+): Asn233, Ala234, Asp312, Thr344, Met345, Leu346, His347, Asp365, Asp388, and Val389.

This sequence belongs to the AgrE/ArgZ ornithine cyclodeaminase family. It depends on NAD(+) as a cofactor.

The catalysed reaction is L-ornithine = L-proline + NH4(+). Functionally, catalyzes the conversion of ornithine to proline, with the release of ammonia. The protein is Ornithine cyclodeaminase of Archaeoglobus fulgidus (strain ATCC 49558 / DSM 4304 / JCM 9628 / NBRC 100126 / VC-16).